The sequence spans 414 residues: 5-aminolevulinate synthase (414 aa).

Arg-22, Ser-133, and Lys-152 together coordinate substrate. Pyridoxal 5'-phosphate-binding residues include Ser-185, His-213, and Thr-241. Residue Lys-244 is part of the active site. Lys-244 carries the post-translational modification N6-(pyridoxal phosphate)lysine. Pyridoxal 5'-phosphate-binding residues include Thr-273 and Thr-274. A substrate-binding site is contributed by Thr-359.

Belongs to the class-II pyridoxal-phosphate-dependent aminotransferase family. Homodimer. Requires pyridoxal 5'-phosphate as cofactor.

It catalyses the reaction succinyl-CoA + glycine + H(+) = 5-aminolevulinate + CO2 + CoA. Its pathway is porphyrin-containing compound metabolism; protoporphyrin-IX biosynthesis; 5-aminolevulinate from glycine: step 1/1. The protein is 5-aminolevulinate synthase (hemA) of Rickettsia felis (strain ATCC VR-1525 / URRWXCal2) (Rickettsia azadi).